The chain runs to 92 residues: Small ribosomal subunit protein uS19 (92 aa).

The protein belongs to the universal ribosomal protein uS19 family.

Its function is as follows. Protein S19 forms a complex with S13 that binds strongly to the 16S ribosomal RNA. This Limosilactobacillus reuteri (strain DSM 20016) (Lactobacillus reuteri) protein is Small ribosomal subunit protein uS19.